Reading from the N-terminus, the 247-residue chain is NADH dehydrogenase [ubiquinone] flavoprotein 2, mitochondrial (247 aa).

The transit peptide at 1 to 40 (MFRSLLKRTTFLNQLNKSNGFNRNYFKQSTLTRSDALSRH) directs the protein to the mitochondrion. 4 residues coordinate [2Fe-2S] cluster: Cys135, Cys140, Cys176, and Cys180. The tract at residues 211-247 (NKPTKIGPQTHRKAAEGPQGKTTLLEPPVGPTCRDDL) is disordered.

This sequence belongs to the complex I 24 kDa subunit family. In terms of assembly, complex I is composed of 45 different subunits. This is a component of the flavoprotein-sulfur (FP) fragment of the enzyme. The cofactor is [2Fe-2S] cluster.

The protein localises to the mitochondrion inner membrane. The enzyme catalyses a ubiquinone + NADH + 5 H(+)(in) = a ubiquinol + NAD(+) + 4 H(+)(out). Core subunit of the mitochondrial membrane respiratory chain NADH dehydrogenase (Complex I) that is believed to belong to the minimal assembly required for catalysis. Complex I functions in the transfer of electrons from NADH to the respiratory chain. The immediate electron acceptor for the enzyme is believed to be ubiquinone. In Dictyostelium discoideum (Social amoeba), this protein is NADH dehydrogenase [ubiquinone] flavoprotein 2, mitochondrial (ndufv2).